We begin with the raw amino-acid sequence, 426 residues long: Histidine--tRNA ligase (426 aa).

The protein belongs to the class-II aminoacyl-tRNA synthetase family. As to quaternary structure, homodimer.

Its subcellular location is the cytoplasm. It carries out the reaction tRNA(His) + L-histidine + ATP = L-histidyl-tRNA(His) + AMP + diphosphate + H(+). This chain is Histidine--tRNA ligase, found in Streptococcus thermophilus (strain CNRZ 1066).